The primary structure comprises 584 residues: DNA damage-binding protein 2 (584 aa).

The interval 1–87 (MGPTTRARFV…PVAAAARSGR (87 aa)) is disordered. Over residues 8-20 (RFVHNRRRRRRRG) the composition is skewed to basic residues. Composition is skewed to acidic residues over residues 25-35 (PDDDDEEEDQQ) and 45-66 (DEGE…DGEA). The CCHC-type zinc-finger motif lies at 122–140 (KPCFLCKMPGGHTTLTCPH). WD repeat units follow at residues 192-232 (FHQR…EKIT), 236-278 (VHSC…SLLN), 288-327 (STWR…RIGD), 333-373 (KKGS…PNSA), 378-418 (AHGR…LESP), 438-481 (EWDP…LAEV), and 484-523 (PDIT…DATE). The DWD box signature appears at 351–366 (LLSSGNDHYARIWDTR). Basic and acidic residues predominate over residues 517–532 (TESDATEERNREKAKE). Residues 517–584 (TESDATEERN…TIKGKGKSKV (68 aa)) form a disordered region. Residues 562 to 584 (KKKKKAKKTRFTHTIKGKGKSKV) show a composition bias toward basic residues.

This sequence belongs to the WD repeat DDB2/WDR76 family. Component of the UV-DDB complex, which is composed of DDB1 and DDB2. As to expression, expressed in proliferating tissues such as shoot apical meristem (SAM), root tips and young leaves. Not detected in mature leaves.

The protein localises to the nucleus. Required for DNA repair. Binds to DDB1 to form the UV-damaged DNA-binding protein complex (the UV-DDB complex). The UV-DDB complex may recognize UV-induced DNA damage and recruit proteins of the nucleotide excision repair pathway (the NER pathway) to initiate DNA repair. May function as the substrate recognition module for a DCX (DDB1-CUL4-X-box) E3 ubiquitin-protein ligase complex. The protein is DNA damage-binding protein 2 of Oryza sativa subsp. japonica (Rice).